The sequence spans 260 residues: Creatinine amidohydrolase (260 aa).

Glu-34 serves as a coordination point for Mn(2+). Positions 34, 36, and 45 each coordinate Zn(2+). Asp-45 is a Mn(2+) binding site. Ser-78 provides a ligand contact to creatine. Residue His-120 participates in Mn(2+) binding. His-120 serves as a coordination point for Zn(2+). 4 residues coordinate creatine: Tyr-121, Trp-174, Asp-175, and His-178. Glu-183 serves as a coordination point for Zn(2+).

Belongs to the creatininase superfamily. Homohexamer; trimer of dimers. It depends on Zn(2+) as a cofactor. The cofactor is Mn(2+).

The enzyme catalyses creatinine + H2O = creatine. It participates in amine and polyamine degradation; creatinine degradation. Its activity is regulated as follows. Is markedly inactivated in vitro by heavy metal ions, N-bromosuccinimide, ethoxyformic anhydride, and dye-sensitized photooxidation. In terms of biological role, cyclic amidohydrolase that catalyzes the reversible conversion of creatinine to creatine. Is also active toward glycocyamidine, though the reaction rate is very low, but it is completely inert toward hydantoin and its derivatives. This is Creatinine amidohydrolase (crnA) from Pseudomonas putida (Arthrobacter siderocapsulatus).